The primary structure comprises 272 residues: Methylsterol monooxygenase 2-1 (272 aa).

3 helical membrane passes run 24 to 44 (IGSF…YIFL), 72 to 94 (LLLY…FRFM), and 107 to 127 (VVSA…YWGH). The region spanning 113–259 (LFYFIIEDFV…FVYMDWIFGT (147 aa)) is the Fatty acid hydroxylase domain. The short motif at 127 to 131 (HRILH) is the Histidine box-1 element. A Histidine box-2 motif is present at residues 140 to 144 (HSVHH). The next 2 membrane-spanning stretches (helical) occupy residues 162–182 (ILFL…HLIT) and 209–229 (NFLP…AYSA). The Histidine box-3 motif lies at 231-237 (FHDYHHR).

Belongs to the sterol desaturase family. Fe cation is required as a cofactor. Strongly expressed in leaves, flowers, siliques and developing seeds.

Its subcellular location is the endoplasmic reticulum membrane. It carries out the reaction 4,4-dimethyl-5alpha-cholest-7-en-3beta-ol + 6 Fe(II)-[cytochrome b5] + 3 O2 + 5 H(+) = 4alpha-carboxy-4beta-methyl-5alpha-cholest-7-ene-3beta-ol + 6 Fe(III)-[cytochrome b5] + 4 H2O. The enzyme catalyses 24-methylidenelophenol + 6 Fe(II)-[cytochrome b5] + 3 O2 + 5 H(+) = 4alpha-carboxy-ergosta-7,24(24(1))-dien-3beta-ol + 6 Fe(III)-[cytochrome b5] + 4 H2O. Its function is as follows. Non-heme iron oxygenase involved in sterols biosynthesis by catalyzing the removal of the second methyl group at the C-4 position. 24-ethylidenelophenol and 24-ethyllophenol are the preferred substrates. Together with SMO2-2, required during embryogenesis, probably by maintaining sterols and auxin homeostasis. In Arabidopsis thaliana (Mouse-ear cress), this protein is Methylsterol monooxygenase 2-1.